A 222-amino-acid chain; its full sequence is MDQSFDQPWPTSLAEARAIQQHIRTRIITHDAHGPIRTVAGVDTGYSGDSALAAVVVLAFPSLEVLDYAVARRQIDFPYVPGYLSFREAPAVLDALASLRIAPDLLICDGHGLAHPRRCGIASHLGVLTDLPSIGCAKSLLVGTHEPPPDVRGAWTPLHDQGEVVGAALRTRPGVRPVYVSIGHRVALETAIRFVMACVTRYRLPETTRAADALASHGRIPR.

Mg(2+) contacts are provided by Asp-43 and Asp-109.

It belongs to the endonuclease V family. Mg(2+) serves as cofactor.

The protein localises to the cytoplasm. The catalysed reaction is Endonucleolytic cleavage at apurinic or apyrimidinic sites to products with a 5'-phosphate.. Its function is as follows. DNA repair enzyme involved in the repair of deaminated bases. Selectively cleaves double-stranded DNA at the second phosphodiester bond 3' to a deoxyinosine leaving behind the intact lesion on the nicked DNA. In Roseiflexus sp. (strain RS-1), this protein is Endonuclease V.